Here is a 263-residue protein sequence, read N- to C-terminus: Pollen allergen Phl p 1 (263 aa).

A signal peptide spans 1–23; the sequence is MASSSSVLLVVVLFAVFLGSAYG. N-linked (GlcNAc...) asparagine glycosylation occurs at N32. The Expansin-like EG45 domain occupies 61-167; it reads GGACGYKDVD…RRVKCKYPEG (107 aa). Intrachain disulfides connect C64/C92, C95/C162, and C100/C106. The region spanning 181-262 is the Expansin-like CBD domain; that stretch reads NYLALLVKYV…GWKADTSYES (82 aa).

Belongs to the expansin family. Expansin B subfamily. As to quaternary structure, homodimer.

It is found in the secreted. The sequence is that of Pollen allergen Phl p 1 (PHLPI) from Phleum pratense (Common timothy).